Consider the following 227-residue polypeptide: MIMKTYFSGVSTLGVHSLATEDYGFFPLSVDQKTMERMKNVLDIPATQLNISNSSLIGSLCVGNSNGLLVPDITTEKEVELIKMFLKENSLDVNLERLKAKNTAFGNLILTNNKGCIISEELSRFRKTIEDVLDVESGVGNYAELPTVGSNGVATDKGCLVHPLTDELELEWIQDILRVDYVERGTANRGVTSVGACILANIKGAVVGGDTSGPEILKIEEALDLID.

This sequence belongs to the eIF-6 family.

Its function is as follows. Binds to the 50S ribosomal subunit and prevents its association with the 30S ribosomal subunit to form the 70S initiation complex. The sequence is that of Translation initiation factor 6 from Methanococcus maripaludis (strain C5 / ATCC BAA-1333).